Reading from the N-terminus, the 433-residue chain is MLDIQLLRKDLDGVAQRLADRGYTLDVAAFSALEAERRAIQTRTEELQARRNSLSKQIGAMKGKGEDTSAVMAEVGGIGDEMKAGEAKLGEIQARLSDLMLGMPNVAHESVPVGKDEADNVEARRWGTPRQFDFEVKDHVDVGTPLGLDFETGAKLAGARFTMLRGSIARLHRALAQFMIDTHTLQHGYTETYTPYIVNPEILYGTGQLPKFADDMFRVEKGGEENKVTQYLISTSEISLTNTVRESIVDASALPIKLTAHSPCFRSEAGSYGRDTRGMIRQHQFDKVEMVQVVAPEASYAALDEMVGHAEAILQKLGLPYRVITLCTGDMGFSAAKTFDLEVWLPAQNTYREISSCSNTEAFQARRMQARFRNAQGKPELVHTLNGSGLAVGRTLVAVLENYQNADGSVTVPEALRPYMGGIERIDAPAQAS.

L-serine is bound at residue 235-237 (TSE). ATP is bound at residue 266-268 (RSE). E289 lines the L-serine pocket. An ATP-binding site is contributed by 353–356 (EISS). S388 serves as a coordination point for L-serine.

This sequence belongs to the class-II aminoacyl-tRNA synthetase family. Type-1 seryl-tRNA synthetase subfamily. In terms of assembly, homodimer. The tRNA molecule binds across the dimer.

It localises to the cytoplasm. The catalysed reaction is tRNA(Ser) + L-serine + ATP = L-seryl-tRNA(Ser) + AMP + diphosphate + H(+). It carries out the reaction tRNA(Sec) + L-serine + ATP = L-seryl-tRNA(Sec) + AMP + diphosphate + H(+). Its pathway is aminoacyl-tRNA biosynthesis; selenocysteinyl-tRNA(Sec) biosynthesis; L-seryl-tRNA(Sec) from L-serine and tRNA(Sec): step 1/1. Its function is as follows. Catalyzes the attachment of serine to tRNA(Ser). Is also able to aminoacylate tRNA(Sec) with serine, to form the misacylated tRNA L-seryl-tRNA(Sec), which will be further converted into selenocysteinyl-tRNA(Sec). The chain is Serine--tRNA ligase from Burkholderia lata (strain ATCC 17760 / DSM 23089 / LMG 22485 / NCIMB 9086 / R18194 / 383).